The primary structure comprises 482 residues: Pup--protein ligase (482 aa).

E16 contributes to the Mg(2+) binding site. R60 is an ATP binding site. Position 62 (Y62) interacts with Mg(2+). D64 (proton acceptor) is an active-site residue. E70 serves as a coordination point for Mg(2+). ATP is bound by residues T73 and W440.

It belongs to the Pup ligase/Pup deamidase family. Pup-conjugating enzyme subfamily.

The enzyme catalyses ATP + [prokaryotic ubiquitin-like protein]-L-glutamate + [protein]-L-lysine = ADP + phosphate + N(6)-([prokaryotic ubiquitin-like protein]-gamma-L-glutamyl)-[protein]-L-lysine.. It participates in protein degradation; proteasomal Pup-dependent pathway. Its pathway is protein modification; protein pupylation. In terms of biological role, catalyzes the covalent attachment of the prokaryotic ubiquitin-like protein modifier Pup to the proteasomal substrate proteins, thereby targeting them for proteasomal degradation. This tagging system is termed pupylation. The ligation reaction involves the side-chain carboxylate of the C-terminal glutamate of Pup and the side-chain amino group of a substrate lysine. In Corynebacterium glutamicum (strain R), this protein is Pup--protein ligase.